Reading from the N-terminus, the 162-residue chain is uncharacterized protein (162 aa).

This sequence belongs to the LOR family.

This is an uncharacterized protein from Bacillus subtilis (strain 168).